The primary structure comprises 227 residues: Uracil-DNA glycosylase (227 aa).

Aspartate 68 serves as the catalytic Proton acceptor.

Belongs to the uracil-DNA glycosylase (UDG) superfamily. UNG family.

Its subcellular location is the cytoplasm. The enzyme catalyses Hydrolyzes single-stranded DNA or mismatched double-stranded DNA and polynucleotides, releasing free uracil.. Excises uracil residues from the DNA which can arise as a result of misincorporation of dUMP residues by DNA polymerase or due to deamination of cytosine. The polypeptide is Uracil-DNA glycosylase (Mycolicibacterium paratuberculosis (strain ATCC BAA-968 / K-10) (Mycobacterium paratuberculosis)).